The primary structure comprises 89 residues: Small ribosomal subunit protein uS15 (89 aa).

Belongs to the universal ribosomal protein uS15 family. In terms of assembly, part of the 30S ribosomal subunit. Forms a bridge to the 50S subunit in the 70S ribosome, contacting the 23S rRNA.

One of the primary rRNA binding proteins, it binds directly to 16S rRNA where it helps nucleate assembly of the platform of the 30S subunit by binding and bridging several RNA helices of the 16S rRNA. Functionally, forms an intersubunit bridge (bridge B4) with the 23S rRNA of the 50S subunit in the ribosome. This chain is Small ribosomal subunit protein uS15, found in Pseudarthrobacter chlorophenolicus (strain ATCC 700700 / DSM 12829 / CIP 107037 / JCM 12360 / KCTC 9906 / NCIMB 13794 / A6) (Arthrobacter chlorophenolicus).